Consider the following 471-residue polypeptide: Actin-related protein 8 (471 aa).

The F-box domain occupies Leu40–Tyr86. Asn256 to Phe259 contributes to the ATP binding site.

The protein belongs to the actin family. Plant ARP8 subfamily. As to expression, ubiquitously expressed in all organs and cell types. Higher expression in seedlings.

The protein resides in the nucleus. Its subcellular location is the nucleolus. The protein localises to the cytoplasm. The protein is Actin-related protein 8 (ARP8) of Arabidopsis thaliana (Mouse-ear cress).